Here is a 134-residue protein sequence, read N- to C-terminus: Interferon-induced transmembrane protein 5 (134 aa).

The segment covering 1–20 (MDTSYPREDPRAPSSRKADA) has biased composition (basic and acidic residues). Positions 1 to 31 (MDTSYPREDPRAPSSRKADAAAHTALSMGTP) are disordered. At 1–39 (MDTSYPREDPRAPSSRKADAAAHTALSMGTPGPTPRDHM) the chain is on the extracellular side. Residues 40–60 (LWSVFSTMYLNLCCLGFLALV) form a helical membrane-spanning segment. S-palmitoyl cysteine attachment occurs at residues C52, C53, and C86. The Cytoplasmic portion of the chain corresponds to 61-88 (HSVKARDQKMAGNLEAARQYGSKAKCYN). The helical transmembrane segment at 89–109 (ILAAMWTLVPPLLLLGLVVTG) threads the bilayer. Residues 110–134 (ALHLSKLAKDSAAFFSTKFDEEDYN) lie on the Extracellular side of the membrane.

Belongs to the CD225/Dispanin family. As to quaternary structure, interacts with FKBP11. Post-translationally, palmitoylated. In terms of tissue distribution, detected in embryonic bone (at protein level). Highly expressed in osteoblasts of adults and embryos. Expressed in primitive hemopoietic cells.

The protein localises to the cell membrane. Functionally, required for normal bone mineralization. This is Interferon-induced transmembrane protein 5 (Ifitm5) from Mus musculus (Mouse).